Here is a 418-residue protein sequence, read N- to C-terminus: Glutamyl-tRNA reductase (418 aa).

Residues 49–52 (TCNR), serine 106, 111–113 (EPQ), and glutamine 117 contribute to the substrate site. The active-site Nucleophile is the cysteine 50. 186 to 191 (GAGEMI) is a binding site for NADP(+).

Belongs to the glutamyl-tRNA reductase family. In terms of assembly, homodimer.

The enzyme catalyses (S)-4-amino-5-oxopentanoate + tRNA(Glu) + NADP(+) = L-glutamyl-tRNA(Glu) + NADPH + H(+). Its pathway is porphyrin-containing compound metabolism; protoporphyrin-IX biosynthesis; 5-aminolevulinate from L-glutamyl-tRNA(Glu): step 1/2. Functionally, catalyzes the NADPH-dependent reduction of glutamyl-tRNA(Glu) to glutamate 1-semialdehyde (GSA). This Alcanivorax borkumensis (strain ATCC 700651 / DSM 11573 / NCIMB 13689 / SK2) protein is Glutamyl-tRNA reductase.